A 322-amino-acid polypeptide reads, in one-letter code: Epoxide hydrolase A (322 aa).

An AB hydrolase-1 domain is found at 27–131; that stretch reads PVVILAHGFP…AVAALSVPAL (105 aa). The active-site Nucleophile is Asp-103. Catalysis depends on His-298, which acts as the Proton acceptor.

This sequence belongs to the AB hydrolase superfamily. Epoxide hydrolase family. In terms of assembly, homodimer.

It catalyses the reaction an epoxide + H2O = an ethanediol. Functionally, could be involved in detoxification of extraneous host-cell epoxides. Catalyzes the hydrolysis of epoxide-containing substrates. The polypeptide is Epoxide hydrolase A (ephA) (Mycobacterium tuberculosis (strain ATCC 25618 / H37Rv)).